Reading from the N-terminus, the 298-residue chain is Transcription factor RHD6 (298 aa).

Disordered stretches follow at residues 1-58 (MALV…SDHQ) and 157-213 (TGSR…AKNR). A compositionally biased stretch (low complexity) spans 15–27 (SKQNSSSSEDLSS). Composition is skewed to polar residues over residues 157–168 (TGSRNESLSPKS) and 177–190 (GEST…SSGV). Low complexity predominate over residues 191 to 205 (TGKTKPKPTTSPKDP). The tract at residues 201–214 (SPKDPQSLAAKNRR) is basic motif. The 50-residue stretch at 201-250 (SPKDPQSLAAKNRRERISERLKILQELVPNGTKVDLVTMLEKAISYVKFL) folds into the bHLH domain. The helix-loop-helix motif stretch occupies residues 215–250 (ERISERLKILQELVPNGTKVDLVTMLEKAISYVKFL).

As to quaternary structure, homodimer. Forms heterodimers with RSL1. Interacts with TIFY10B/JAZ2, TIFY6A/JAZ4, TIFY5A/JAZ8, TIFY7/JAZ9 and TIFY9/JAZ10. As to expression, expressed constitutively in flowers. Expressed in root epidermal hair cells.

The protein resides in the nucleus. Transcription factor that is specifically required for the development of root hairs. Acts with RSL1 to positively regulate root hair development. Acts downstream of genes that regulate epidermal pattern formation, such as GL2. Targets directly RSL4, another transcription factor involved in the regulation of root hair elongation. Acts with RSL1 as transcription factor that integrates a jasmonate (JA) signaling pathway that stimulates root hair growth. The polypeptide is Transcription factor RHD6 (Arabidopsis thaliana (Mouse-ear cress)).